We begin with the raw amino-acid sequence, 95 residues long: MSIKPLHDRVVVKPIEADEISAGGIVIPDSAKEKSTKGEVVAVGPGKPLDNGSVRAPSLKVGDKVIYGQYAGSSYKSEGVEYKVLREDDVLAVIG.

Belongs to the GroES chaperonin family. In terms of assembly, heptamer of 7 subunits arranged in a ring. Interacts with the chaperonin GroEL.

The protein resides in the cytoplasm. Functionally, together with the chaperonin GroEL, plays an essential role in assisting protein folding. The GroEL-GroES system forms a nano-cage that allows encapsulation of the non-native substrate proteins and provides a physical environment optimized to promote and accelerate protein folding. GroES binds to the apical surface of the GroEL ring, thereby capping the opening of the GroEL channel. This Stenotrophomonas maltophilia (strain R551-3) protein is Co-chaperonin GroES.